We begin with the raw amino-acid sequence, 123 residues long: Small ribosomal subunit protein uS12 (123 aa).

Aspartate 89 is subject to 3-methylthioaspartic acid.

It belongs to the universal ribosomal protein uS12 family. As to quaternary structure, part of the 30S ribosomal subunit. Contacts proteins S8 and S17. May interact with IF1 in the 30S initiation complex.

Functionally, with S4 and S5 plays an important role in translational accuracy. In terms of biological role, interacts with and stabilizes bases of the 16S rRNA that are involved in tRNA selection in the A site and with the mRNA backbone. Located at the interface of the 30S and 50S subunits, it traverses the body of the 30S subunit contacting proteins on the other side and probably holding the rRNA structure together. The combined cluster of proteins S8, S12 and S17 appears to hold together the shoulder and platform of the 30S subunit. In Mesorhizobium japonicum (strain LMG 29417 / CECT 9101 / MAFF 303099) (Mesorhizobium loti (strain MAFF 303099)), this protein is Small ribosomal subunit protein uS12.